A 208-amino-acid polypeptide reads, in one-letter code: dITP/XTP pyrophosphatase (208 aa).

Ser-16–Lys-21 is a substrate binding site. Asp-79 serves as the catalytic Proton acceptor. Asp-79 lines the Mg(2+) pocket. Substrate-binding positions include Ser-80, Phe-166 to Asp-169, Lys-189, and His-194 to Arg-195.

This sequence belongs to the HAM1 NTPase family. In terms of assembly, homodimer. The cofactor is Mg(2+).

It catalyses the reaction XTP + H2O = XMP + diphosphate + H(+). It carries out the reaction dITP + H2O = dIMP + diphosphate + H(+). The enzyme catalyses ITP + H2O = IMP + diphosphate + H(+). In terms of biological role, pyrophosphatase that catalyzes the hydrolysis of nucleoside triphosphates to their monophosphate derivatives, with a high preference for the non-canonical purine nucleotides XTP (xanthosine triphosphate), dITP (deoxyinosine triphosphate) and ITP. Seems to function as a house-cleaning enzyme that removes non-canonical purine nucleotides from the nucleotide pool, thus preventing their incorporation into DNA/RNA and avoiding chromosomal lesions. The polypeptide is dITP/XTP pyrophosphatase (Acinetobacter baumannii (strain ACICU)).